The chain runs to 750 residues: ABC transporter D family member 3 (750 aa).

The segment covering 1–14 (MKKNNVNNITETLN) has biased composition (polar residues). Residues 1 to 32 (MKKNNVNNITETLNSSSSSSSSSGSSSDEEVK) are disordered. Positions 15–26 (SSSSSSSSSGSS) are enriched in low complexity. The next 4 membrane-spanning stretches (helical) occupy residues 63–83 (IVII…LLFG), 123–143 (FAIG…SIMA), 188–208 (FTTL…VVVY), and 215–235 (TTID…GYFI). Residues 74-362 (PLLLFLLLFG…EQAKQQFEAL (289 aa)) enclose the ABC transmembrane type-1 domain. The stretch at 334 to 370 (ALLKRSNKNIKNEELLVEEEQAKQQFEALLKNKKRVI) forms a coiled coil. The chain crosses the membrane as a helical span at residues 382–402 (MFTFFSPLINYFIISIPVFFL). Residues 507–737 (ITLDDVTYFT…SNNINTINID (231 aa)) form the ABC transporter domain. 540–547 (GPSGSGKS) lines the ATP pocket.

This sequence belongs to the ABC transporter superfamily. ABCD family. Peroxisomal fatty acyl CoA transporter (TC 3.A.1.203) subfamily.

Its subcellular location is the membrane. The polypeptide is ABC transporter D family member 3 (abcD3) (Dictyostelium discoideum (Social amoeba)).